A 766-amino-acid polypeptide reads, in one-letter code: Serine/threonine-protein kinase tousled-like 1 (766 aa).

At methionine 1 the chain carries N-acetylmethionine. The segment covering 1–19 (MSVQSSSGSLEGPPSWSQL) has biased composition (polar residues). The interval 1-197 (MSVQSSSGSL…SPSPTALAFG (197 aa)) is disordered. Residues 20–33 (STSPTPGSAAAARS) show a composition bias toward low complexity. Threonine 38 bears the Phosphothreonine mark. Residues 43-64 (RPREGAMDELHSLDPRRQELLE) are compositionally biased toward basic and acidic residues. Residues serine 54, serine 77, and serine 80 each carry the phosphoserine modification. Low complexity predominate over residues 68–85 (TGVASGSTGSTGSCSVGA). Residues 87–103 (ASTNNESSNHSFGSLGS) are compositionally biased toward polar residues. Residues 105–121 (SDKESETPEKKQSESSR) are compositionally biased toward basic and acidic residues. Residues serine 134, serine 159, serine 174, and serine 176 each carry the phosphoserine modification. Positions 170 to 192 (SPQNSHSHSTPSSSVRPNSPSPT) are enriched in low complexity. Positions 230 to 281 (QDLEKKEGRIDDLLRANCDLRRQIDEQQKLLEKYKERLNKCISMSKKLLIEK) form a coiled coil. The interval 346–383 (LAKRKPPTANNSQAPSTNSEPKQRKNKAVNGAENDPFV) is disordered. The segment covering 353–365 (TANNSQAPSTNSE) has biased composition (polar residues). Residues 397 to 445 (HEQEEIFKLRLGHLKKEEAEIQAELERLERVRNLHIRELKRINNEDNSQ) adopt a coiled-coil conformation. Residues 456–734 (YLLLHLLGRG…VHQLANDPYL (279 aa)) form the Protein kinase domain. Residues 462–470 (LGRGGFSEV) and lysine 485 contribute to the ATP site. Aspartate 586 functions as the Proton acceptor in the catalytic mechanism. Phosphoserine is present on serine 743.

The protein belongs to the protein kinase superfamily. Ser/Thr protein kinase family. As to quaternary structure, heterodimer with TLK2. The cofactor is Mg(2+). As to expression, widely expressed. Present in fetal placenta, liver, kidney and pancreas but not heart or skeletal muscle. Also found in adult cell lines. Isoform 3 is ubiquitously expressed in all tissues examined.

The protein localises to the nucleus. The catalysed reaction is L-seryl-[protein] + ATP = O-phospho-L-seryl-[protein] + ADP + H(+). The enzyme catalyses L-threonyl-[protein] + ATP = O-phospho-L-threonyl-[protein] + ADP + H(+). With respect to regulation, cell-cycle regulated, maximal activity in S-phase. Inactivated by phosphorylation at Ser-743, potentially by CHEK1. In terms of biological role, rapidly and transiently inhibited by phosphorylation following the generation of DNA double-stranded breaks during S-phase. This is cell cycle checkpoint and ATM-pathway dependent and appears to regulate processes involved in chromatin assembly. Isoform 3 phosphorylates and enhances the stability of the t-SNARE SNAP23, augmenting its assembly with syntaxin. Isoform 3 protects the cells from the ionizing radiation by facilitating the repair of DSBs. In vitro, phosphorylates histone H3 at 'Ser-10'. This chain is Serine/threonine-protein kinase tousled-like 1 (TLK1), found in Homo sapiens (Human).